A 245-amino-acid polypeptide reads, in one-letter code: tRNA (guanine-N(1)-)-methyltransferase (245 aa).

S-adenosyl-L-methionine contacts are provided by residues Gly111 and 131-136 (IGDYVL).

Belongs to the RNA methyltransferase TrmD family. As to quaternary structure, homodimer.

The protein resides in the cytoplasm. The catalysed reaction is guanosine(37) in tRNA + S-adenosyl-L-methionine = N(1)-methylguanosine(37) in tRNA + S-adenosyl-L-homocysteine + H(+). Functionally, specifically methylates guanosine-37 in various tRNAs. In Staphylococcus haemolyticus (strain JCSC1435), this protein is tRNA (guanine-N(1)-)-methyltransferase.